The following is a 351-amino-acid chain: GDSL esterase/lipase At3g53100 (351 aa).

A signal peptide spans 1 to 24; the sequence is MQKMRVSGFRVLLLVSCFFCKSKG. The Nucleophile role is filled by Ser36. Asn234, Asn254, and Asn318 each carry an N-linked (GlcNAc...) asparagine glycan. Catalysis depends on residues Asp326 and His329.

It belongs to the 'GDSL' lipolytic enzyme family.

The protein resides in the secreted. The chain is GDSL esterase/lipase At3g53100 from Arabidopsis thaliana (Mouse-ear cress).